The following is a 95-amino-acid chain: Integration host factor subunit beta (95 aa).

The protein belongs to the bacterial histone-like protein family. As to quaternary structure, heterodimer of an alpha and a beta chain.

This protein is one of the two subunits of integration host factor, a specific DNA-binding protein that functions in genetic recombination as well as in transcriptional and translational control. Involved in hydrogenase gene expression. The polypeptide is Integration host factor subunit beta (ihfB) (Rhodobacter capsulatus (Rhodopseudomonas capsulata)).